A 160-amino-acid chain; its full sequence is Probable transcriptional regulator YgiV (160 aa).

Its function is as follows. Represses expression of mcbR. In Escherichia coli (strain K12), this protein is Probable transcriptional regulator YgiV (ygiV).